The primary structure comprises 616 residues: MSSLAVRDPAMDRSLRSVFVGNIPYEATEEQLKDIFSEVGSVVSFRLVYDRETGKPKGYGFCEYQDQETALSAMRNLNGREFSGRALRVDNAASEKNKEELKSLGPAAPIIDSPYGDPIDPEDAPESITRAVASLPPEQMFELMKQMKLCVQNSHQEARNMLLQNPQLAYALLQAQVVMRIMDPEIALKILHRKIHVTPLIPGKSQSVSVSGPGPGPGPGLCPGPNVLLNQQNPPAPQPQHLARRPVKDIPPLMQTPIQGGIPAPGPIPAAVPGAGPGSLTPGGAMQPQLGMPGVGPVPLERGQVQMSDPRAPIPRGPVTPGGLPPRGLLGDAPNDPRGGTLLSVTGEVEPRGYLGPPHQGPPMHHASGHDTRGPSSHEMRGGPLGDPRLLIGEPRGPMIDQRGLPMDGRGGRDSRAMETRAMETEVLETRVMERRGMETCAMETRGMEARGMDARGLEMRGPVPSSRGPMTGGIQGPGPINIGAGGPPQGPRQVPGISGVGNPGAGMQGTGIQGTGMQGAGIQGGGMQGAGIQGVSIQGGGIQGGGIQGASKQGGSQPSSFSPGQSQVTPQDQEKAALIMQVLQLTADQIAMLPPEQRQSILILKEQIQKSTGAS.

Residues 16-94 (RSVFVGNIPY…RALRVDNAAS (79 aa)) form the RRM domain. 2 disordered regions span residues 203–241 (GKSQ…QPQH) and 262–418 (IPAP…SRAM). Low complexity-rich tracts occupy residues 223-233 (PGPNVLLNQQN) and 319-331 (VTPG…GLLG). At Thr-320 the chain carries Phosphothreonine. Positions 368 to 381 (SGHDTRGPSSHEMR) are enriched in basic and acidic residues. Residues 418-422 (METRA) form a 1-1 repeat. The interval 418-462 (METRAMETEVLETRVMERRGMETCAMETRGMEARGMDARGLEMRG) is 9 X 5 AA tandem repeats of M-E-T-R-[AG]. The stretch at 423-427 (METEV) is one 1-2; approximate repeat. The stretch at 428–432 (LETRV) is one 1-3; approximate repeat. A 1-4; approximate repeat occupies 433 to 437 (MERRG). The 1-5; approximate repeat unit spans residues 438–442 (METCA). Residues 443–447 (METRG) form a 1-6 repeat. The 1-7; approximate repeat unit spans residues 448–452 (MEARG). The 1-8; approximate repeat unit spans residues 453–457 (MDARG). One copy of the 1-9; approximate repeat lies at 458 to 462 (LEMRG). 4 repeat units span residues 505-509 (GAGMQ), 510-514 (GTGIQ), 515-519 (GTGMQ), and 520-524 (GAGIQ). The tract at residues 505–549 (GAGMQGTGIQGTGMQGAGIQGGGMQGAGIQGVSIQGGGIQGGGIQ) is 9 X 5 AA tandem repeats of G-[AT]-G-[MI]-Q. A 2-5; approximate repeat occupies 525–529 (GGGMQ). A 2-6 repeat occupies 530–534 (GAGIQ). Residues 535–539 (GVSIQ) form a 2-7; approximate repeat. Residues 540–544 (GGGIQ) form a 2-8; approximate repeat. The segment at 542-573 (GIQGGGIQGASKQGGSQPSSFSPGQSQVTPQD) is disordered. The stretch at 545 to 549 (GGGIQ) is one 2-9; approximate repeat. The segment covering 550-568 (GASKQGGSQPSSFSPGQSQ) has biased composition (low complexity). Ser-563 carries the phosphoserine modification.

It localises to the nucleus. May play a significant role in AAUAAA-independent mRNA polyadenylation in germ cells. Directly involved in the binding to pre-mRNAs. This chain is Cleavage stimulation factor subunit 2 tau variant (CSTF2T), found in Homo sapiens (Human).